A 295-amino-acid chain; its full sequence is Putative attaching and effacing protein homolog (295 aa).

The signal sequence occupies residues 1–25 (MSHYKTGHKQPRFRYSVLARCVAWA).

This sequence belongs to the intimin/invasin family.

This Escherichia coli (strain K12) protein is Putative attaching and effacing protein homolog (eaeH).